Reading from the N-terminus, the 510-residue chain is GPI mannosyltransferase 3 (510 aa).

7 helical membrane-spanning segments follow: residues 17–37 (TVLV…KTFF), 96–116 (IAPK…TWKL), 123–143 (PAEA…WFFL), 145–163 (RTFS…LNYW), 179–199 (LFIG…WAVL), 221–241 (VALV…EPVF), and 269–289 (YEAL…GLWI). N-linked (GlcNAc...) asparagine glycosylation occurs at Asn-290. The next 2 helical transmembrane spans lie at 316 to 336 (FIYP…TQTP) and 342 to 362 (WLVW…SQVH).

The protein belongs to the glycosyltransferase 22 family. PIGB subfamily.

It localises to the endoplasmic reticulum membrane. Its pathway is glycolipid biosynthesis; glycosylphosphatidylinositol-anchor biosynthesis. Mannosyltransferase involved in glycosylphosphatidylinositol-anchor biosynthesis. Transfers the third mannose to Man2-GlcN-acyl-PI during GPI precursor assembly. The polypeptide is GPI mannosyltransferase 3 (GPI10) (Yarrowia lipolytica (strain CLIB 122 / E 150) (Yeast)).